Reading from the N-terminus, the 486-residue chain is 23S rRNA (uracil(1939)-C(5))-methyltransferase RlmD (486 aa).

One can recognise a TRAM domain in the interval 10-71 (TVKAPEYLPD…SSFEKAVVMA (62 aa)). [4Fe-4S] cluster contacts are provided by Cys84, Cys94, Cys97, and Cys176. S-adenosyl-L-methionine-binding residues include Gln285, Phe314, Asn319, Glu335, Asn370, and Asp391. The active-site Nucleophile is Cys442.

Belongs to the class I-like SAM-binding methyltransferase superfamily. RNA M5U methyltransferase family. RlmD subfamily.

It carries out the reaction uridine(1939) in 23S rRNA + S-adenosyl-L-methionine = 5-methyluridine(1939) in 23S rRNA + S-adenosyl-L-homocysteine + H(+). Functionally, catalyzes the formation of 5-methyl-uridine at position 1939 (m5U1939) in 23S rRNA. The protein is 23S rRNA (uracil(1939)-C(5))-methyltransferase RlmD of Polaromonas sp. (strain JS666 / ATCC BAA-500).